A 171-amino-acid polypeptide reads, in one-letter code: MIIYKDIITGDEMFSDIYKIKESENGMMLEVEGKMITRAEGDIDDALIGGNASAEVADEGCDSTSVSGVDIVLNHKLQETSYDKKSYTAYIKDYMKAVKAKLQESAPNRVDPFMANAPAEVKKILGNIKNFQFFTGESMNPDGMIGLLDFREDGVTPYMIFFKDGLEIEKC.

The TCTP domain maps to 1 to 171 (MIIYKDIITG…FKDGLEIEKC (171 aa)).

Belongs to the TCTP family.

Its subcellular location is the cytoplasm. In terms of biological role, involved in calcium binding and microtubule stabilization. The sequence is that of Translationally-controlled tumor protein homolog (tpt1) from Danio rerio (Zebrafish).